The chain runs to 254 residues: Putative epimerase LsrE (254 aa).

A helical transmembrane segment spans residues 14–34 (VALLASYPLSVGILAGQWIAL). A divalent metal cation-binding residues include His-50, Asp-52, and His-81. Asp-52 (proton acceptor) is an active-site residue. Residues His-81, 166 to 169 (GYGS), 199 to 201 (DGS), and 221 to 222 (GS) contribute to the substrate site. Residue Asp-199 participates in a divalent metal cation binding. The active-site Proton donor is the Asp-199.

It belongs to the ribulose-phosphate 3-epimerase family. A divalent metal cation serves as cofactor.

It is found in the cell membrane. This Salmonella paratyphi A (strain ATCC 9150 / SARB42) protein is Putative epimerase LsrE (lsrE).